The sequence spans 609 residues: 2',5'-phosphodiesterase 12 (609 aa).

The transit peptide at 1 to 16 (MWRLPGVRAALRGVRT) directs the protein to the mitochondrion. Positions 203-231 (PRAAEPEGGGPSSSSPSSPSPGWTETGVD) are disordered. The span at 214–224 (SSSSPSSPSPG) shows a compositional bias: low complexity. Ser217 carries the post-translational modification Phosphoserine. Residues Glu351, Asp496, and Asn498 each contribute to the Mg(2+) site. The active-site Proton donor/acceptor is the Asp496.

The protein belongs to the CCR4/nocturin family. Requires Mg(2+) as cofactor. Liver.

The protein localises to the mitochondrion matrix. It carries out the reaction Exonucleolytic cleavage of poly(A) to 5'-AMP.. Functionally, enzyme that cleaves 2',5'-phosphodiester bond linking adenosines of the 5'-triphosphorylated oligoadenylates, triphosphorylated oligoadenylates referred as 2-5A modulates the 2-5A system. Degrades triphosphorylated 2-5A to produce AMP and ATP. Also cleaves 3',5'-phosphodiester bond of oligoadenylates. Plays a role as a negative regulator of the 2-5A system that is one of the major pathways for antiviral and antitumor functions induced by interferons (IFNs). Suppression of this enzyme increases cellular 2-5A levels and decreases viral replication in cultured small-airway epithelial cells. This Bos taurus (Bovine) protein is 2',5'-phosphodiesterase 12 (PDE12).